The following is a 180-amino-acid chain: Ribulose bisphosphate carboxylase small subunit, chloroplastic 2 (180 aa).

The N-terminal 56 residues, 1–56, are a transit peptide targeting the chloroplast; that stretch reads MASMISSSAVTTVSRASRGQSAAVAPFGGLKSMTGFPVKKVNTDITSITSNGGRVK.

Belongs to the RuBisCO small chain family. In terms of assembly, heterohexadecamer of 8 large and 8 small subunits.

It is found in the plastid. It localises to the chloroplast. Functionally, ruBisCO catalyzes two reactions: the carboxylation of D-ribulose 1,5-bisphosphate, the primary event in carbon dioxide fixation, as well as the oxidative fragmentation of the pentose substrate. Both reactions occur simultaneously and in competition at the same active site. Although the small subunit is not catalytic it is essential for maximal activity. In Pisum sativum (Garden pea), this protein is Ribulose bisphosphate carboxylase small subunit, chloroplastic 2.